The following is a 227-amino-acid chain: ATP-dependent dethiobiotin synthetase BioD (227 aa).

13–18 (DIGKTY) is a binding site for ATP. Thr17 is a binding site for Mg(2+). The active site involves Lys38. Ser42 lines the substrate pocket. ATP contacts are provided by residues Asp55, 116–119 (EGSG), and 179–180 (NN). Positions 55 and 116 each coordinate Mg(2+).

It belongs to the dethiobiotin synthetase family. As to quaternary structure, homodimer. Mg(2+) is required as a cofactor.

The protein resides in the cytoplasm. The catalysed reaction is (7R,8S)-7,8-diammoniononanoate + CO2 + ATP = (4R,5S)-dethiobiotin + ADP + phosphate + 3 H(+). The protein operates within cofactor biosynthesis; biotin biosynthesis; biotin from 7,8-diaminononanoate: step 1/2. Catalyzes a mechanistically unusual reaction, the ATP-dependent insertion of CO2 between the N7 and N8 nitrogen atoms of 7,8-diaminopelargonic acid (DAPA, also called 7,8-diammoniononanoate) to form a ureido ring. This Clostridium botulinum (strain Loch Maree / Type A3) protein is ATP-dependent dethiobiotin synthetase BioD.